Here is a 336-residue protein sequence, read N- to C-terminus: Dihydroorotate dehydrogenase (quinone) (336 aa).

Residues 62 to 66 (AGLDK) and T86 each bind FMN. K66 contacts substrate. 111–115 (NRMGF) serves as a coordination point for substrate. FMN is bound by residues N139 and N172. Residue N172 coordinates substrate. S175 functions as the Nucleophile in the catalytic mechanism. Substrate is bound at residue N177. Residues K217 and T245 each coordinate FMN. 246 to 247 (NT) provides a ligand contact to substrate. Residues G268, G297, and 318 to 319 (FS) each bind FMN.

This sequence belongs to the dihydroorotate dehydrogenase family. Type 2 subfamily. Monomer. Requires FMN as cofactor.

Its subcellular location is the cell membrane. It catalyses the reaction (S)-dihydroorotate + a quinone = orotate + a quinol. It participates in pyrimidine metabolism; UMP biosynthesis via de novo pathway; orotate from (S)-dihydroorotate (quinone route): step 1/1. Its function is as follows. Catalyzes the conversion of dihydroorotate to orotate with quinone as electron acceptor. This chain is Dihydroorotate dehydrogenase (quinone), found in Photorhabdus laumondii subsp. laumondii (strain DSM 15139 / CIP 105565 / TT01) (Photorhabdus luminescens subsp. laumondii).